Reading from the N-terminus, the 125-residue chain is Large ribosomal subunit protein uL18 (125 aa).

An N-acetylglycine modification is found at Gly2. Residues Lys5 and Lys48 each carry the N6-acetyllysine modification.

The protein belongs to the universal ribosomal protein uL18 family. As to quaternary structure, component of the large ribosomal subunit (LSU). Part of the 5S RNP complex, which is a LSU subcomplex composed of the 5S RNA, RPL5 and RPL11. Component of a hexameric 5S RNP precursor complex, composed of 5S RNA, RRS1, RPF2/BXDC1, RPL5, RPL11 and HEATR3; this complex acts as a precursor for ribosome assembly. Interacts with NVL in an ATP-dependent manner. Interacts with RRP1B. Interacts with IPO5, IPO7 and KPNB1; these interactions may be involved in RPL5 nuclear import for the assembly of ribosomal subunits. Interacts with RRP1B.

It localises to the cytoplasm. The protein resides in the nucleus. The protein localises to the nucleolus. Functionally, component of the ribosome, a large ribonucleoprotein complex responsible for the synthesis of proteins in the cell. The small ribosomal subunit (SSU) binds messenger RNAs (mRNAs) and translates the encoded message by selecting cognate aminoacyl-transfer RNA (tRNA) molecules. The large subunit (LSU) contains the ribosomal catalytic site termed the peptidyl transferase center (PTC), which catalyzes the formation of peptide bonds, thereby polymerizing the amino acids delivered by tRNAs into a polypeptide chain. The nascent polypeptides leave the ribosome through a tunnel in the LSU and interact with protein factors that function in enzymatic processing, targeting, and the membrane insertion of nascent chains at the exit of the ribosomal tunnel. As part of the 5S RNP/5S ribonucleoprotein particle it is an essential component of the LSU, required for its formation and the maturation of rRNAs. It also couples ribosome biogenesis to p53/TP53 activation. As part of the 5S RNP it accumulates in the nucleoplasm and inhibits MDM2, when ribosome biogenesis is perturbed, mediating the stabilization and the activation of TP53. This is Large ribosomal subunit protein uL18 (RPL5) from Sus scrofa (Pig).